The sequence spans 578 residues: A-type ATP synthase subunit A (578 aa).

228 to 235 is a binding site for ATP; the sequence is GPFGSGKT.

The protein belongs to the ATPase alpha/beta chains family. In terms of assembly, has multiple subunits with at least A(3), B(3), C, D, E, F, H, I and proteolipid K(x).

The protein localises to the cell membrane. It carries out the reaction ATP + H2O + 4 H(+)(in) = ADP + phosphate + 5 H(+)(out). Functionally, produces ATP from ADP in the presence of a proton gradient across the membrane. The archaeal alpha chain is a catalytic subunit. In terms of biological role, component of the A-type ATP synthase that produces ATP from ADP in the presence of a proton gradient across the membrane. The A chain is the catalytic subunit. The sequence is that of A-type ATP synthase subunit A from Methanosarcina barkeri.